We begin with the raw amino-acid sequence, 378 residues long: Heterogeneous nuclear ribonucleoprotein A3 (378 aa).

Methionine 1 is subject to N-acetylmethionine. The span at 1-10 (MEVKPPPGRP) shows a compositional bias: pro residues. The interval 1–34 (MEVKPPPGRPQPDSGRRRRRRGEEGHDPKEPEQL) is disordered. Lysine 4 participates in a covalent cross-link: Glycyl lysine isopeptide (Lys-Gly) (interchain with G-Cter in SUMO2). Residue serine 14 is modified to Phosphoserine. Residues 21-34 (RGEEGHDPKEPEQL) are compositionally biased toward basic and acidic residues. The RRM 1 domain occupies 35 to 118 (RKLFIGGLSF…RAVSREDSVK (84 aa)). A Glycyl lysine isopeptide (Lys-Gly) (interchain with G-Cter in SUMO2) cross-link involves residue lysine 36. A Phosphoserine modification is found at serine 43. Residue arginine 52 is modified to Dimethylated arginine; alternate. Residue arginine 52 is modified to Omega-N-methylarginine; alternate. Residue arginine 76 is modified to Omega-N-methylarginine. Phosphoserine occurs at positions 112 and 116. Residue lysine 118 forms a Glycyl lysine isopeptide (Lys-Gly) (interchain with G-Cter in SUMO2) linkage. Threonine 124 bears the Phosphothreonine mark. One can recognise an RRM 2 domain in the interval 126–205 (KKIFVGGIKE…CEVKKALSKQ (80 aa)). Lysine 134 bears the N6-acetyllysine; alternate mark. Residue lysine 134 forms a Glycyl lysine isopeptide (Lys-Gly) (interchain with G-Cter in SUMO2); alternate linkage. Glycyl lysine isopeptide (Lys-Gly) (interchain with G-Cter in SUMO2) cross-links involve residues lysine 151 and lysine 182. Positions 204 to 225 (KQEMQSAGSQRGRGGGSGNFMG) are disordered. 5 positions are modified to omega-N-methylarginine; alternate: arginine 214, arginine 216, arginine 226, arginine 239, and arginine 246. An asymmetric dimethylarginine; alternate mark is found at arginine 214, arginine 216, arginine 226, arginine 239, and arginine 246. Positions 214–225 (RGRGGGSGNFMG) are enriched in gly residues. Arginine 257 is subject to Omega-N-methylarginine. Arginine 286 carries the asymmetric dimethylarginine modification. Residues 336–378 (SGQQQSNYGPMKGGSFGGRSSGSPYGGGYGSGGGSGGYGSRRF) form a disordered region. Residues 346–378 (MKGGSFGGRSSGSPYGGGYGSGGGSGGYGSRRF) are compositionally biased toward gly residues. Serine 350 carries the post-translational modification Phosphoserine. Residue arginine 354 is modified to Omega-N-methylarginine. Serine 358 is subject to Phosphoserine. 2 positions are modified to phosphotyrosine: tyrosine 360 and tyrosine 364. 2 positions are modified to phosphoserine: serine 366 and serine 370. Residue tyrosine 373 is modified to Phosphotyrosine. Position 375 is a phosphoserine (serine 375).

Identified in the spliceosome C complex.

Its subcellular location is the nucleus. In terms of biological role, plays a role in cytoplasmic trafficking of RNA. Binds to the cis-acting response element, A2RE. May be involved in pre-mRNA splicing. The protein is Heterogeneous nuclear ribonucleoprotein A3 (HNRNPA3) of Homo sapiens (Human).